The sequence spans 272 residues: uncharacterized protein (272 aa).

This is an uncharacterized protein from Sinorhizobium fredii (strain NBRC 101917 / NGR234).